Consider the following 185-residue polypeptide: Ribosome-recycling factor (185 aa).

The protein belongs to the RRF family.

Its subcellular location is the cytoplasm. Functionally, responsible for the release of ribosomes from messenger RNA at the termination of protein biosynthesis. May increase the efficiency of translation by recycling ribosomes from one round of translation to another. The sequence is that of Ribosome-recycling factor from Thermotoga sp. (strain RQ2).